Consider the following 292-residue polypeptide: Chondroitin proteoglycan 3 (292 aa).

A signal peptide spans 1–17; it reads MRFVFIIALLLIGASLA. Residues 28–103 are disordered; it reads DVSASEDEFS…EGSGDTSPVV (76 aa). Low complexity predominate over residues 38–80; it reads GDSSGEISGESSGEASGEASGEASGEASGEASGESSGETSGES. The segment covering 81-96 has biased composition (acidic residues); sequence SGDEETSGEGSGEEGS. Residues Asn-174 and Asn-254 are each glycosylated (N-linked (GlcNAc...) asparagine).

The chain is Chondroitin proteoglycan 3 from Caenorhabditis elegans.